We begin with the raw amino-acid sequence, 154 residues long: MIIKNLQEFYRLLIPNAPLIAIDYGSKKLGIALSNQELSIAMPLNTITEINKKIVITSLLNIIEKYKVCGVIIGLPIDMSGAVTEQTNIVMKFAEELAKSINLPIYLQDERLTTKAANNLLKSFGVKRKDRNNNDDAVAASMILETVLDSIKNI.

Belongs to the YqgF nuclease family.

It is found in the cytoplasm. Its function is as follows. Could be a nuclease involved in processing of the 5'-end of pre-16S rRNA. This Rickettsia africae (strain ESF-5) protein is Putative pre-16S rRNA nuclease.